Consider the following 336-residue polypeptide: Ketol-acid reductoisomerase (NADP(+)) 1 (336 aa).

A KARI N-terminal Rossmann domain is found at 2–181 (AKVYYEKDVT…GATRAGVLET (180 aa)). NADP(+)-binding positions include 25-28 (YGSQ), Arg-48, Ser-52, and 82-85 (DELQ). Residue His-107 is part of the active site. Gly-133 is an NADP(+) binding site. The KARI C-terminal knotted domain maps to 182–327 (TFKEETETDL…RKLREMMPFV (146 aa)). Mg(2+) contacts are provided by Asp-190, Glu-194, Glu-226, and Glu-230. Position 251 (Ser-251) interacts with substrate.

This sequence belongs to the ketol-acid reductoisomerase family. Requires Mg(2+) as cofactor.

It catalyses the reaction (2R)-2,3-dihydroxy-3-methylbutanoate + NADP(+) = (2S)-2-acetolactate + NADPH + H(+). It carries out the reaction (2R,3R)-2,3-dihydroxy-3-methylpentanoate + NADP(+) = (S)-2-ethyl-2-hydroxy-3-oxobutanoate + NADPH + H(+). It participates in amino-acid biosynthesis; L-isoleucine biosynthesis; L-isoleucine from 2-oxobutanoate: step 2/4. It functions in the pathway amino-acid biosynthesis; L-valine biosynthesis; L-valine from pyruvate: step 2/4. Functionally, involved in the biosynthesis of branched-chain amino acids (BCAA). Catalyzes an alkyl-migration followed by a ketol-acid reduction of (S)-2-acetolactate (S2AL) to yield (R)-2,3-dihydroxy-isovalerate. In the isomerase reaction, S2AL is rearranged via a Mg-dependent methyl migration to produce 3-hydroxy-3-methyl-2-ketobutyrate (HMKB). In the reductase reaction, this 2-ketoacid undergoes a metal-dependent reduction by NADPH to yield (R)-2,3-dihydroxy-isovalerate. This is Ketol-acid reductoisomerase (NADP(+)) 1 from Bacillus cereus (strain ATCC 14579 / DSM 31 / CCUG 7414 / JCM 2152 / NBRC 15305 / NCIMB 9373 / NCTC 2599 / NRRL B-3711).